A 443-amino-acid polypeptide reads, in one-letter code: SURP and G-patch domain-containing protein 1-like protein (443 aa).

2 disordered regions span residues 45–71 (IISN…KGGK) and 83–141 (LAPP…TVKK). An SURP motif repeat occupies 142 to 185 (VADKLASFVAKHGRPFEHITRQKNPGDTPFKFLFDENCADYKYY). Disordered regions lie at residues 198–221 (QTKD…AIPL), 241–272 (TPVE…RGAD), and 285–325 (AQEE…HHMG). The span at 248 to 265 (SSRSAQASITRPSDSDSF) shows a compositional bias: polar residues. Over residues 285–300 (AQEEKMRRPRQSKDEM) the composition is skewed to basic and acidic residues. Residues 307 to 316 (QGPSETSSTD) are compositionally biased toward polar residues. The G-patch domain maps to 360-407 (ADNVGHKLLSKMGWKEGEGIGSSRKGMADPIMAGDVKTNNLGVGASAP).

The protein localises to the nucleus. This is SURP and G-patch domain-containing protein 1-like protein from Arabidopsis thaliana (Mouse-ear cress).